An 804-amino-acid polypeptide reads, in one-letter code: E3 ubiquitin-protein ligase RNF10 (804 aa).

3 stretches are compositionally biased toward low complexity: residues 1–31, 78–90, and 104–113; these read MPQSSPSAAATASDMDKNSGSNSSSASSGSS, SNQSRRSNSQKSK, and SKPFSSSSNG. Residues 1 to 134 are disordered; it reads MPQSSPSAAA…AEFSPAQFSG (134 aa). A Phosphoserine modification is found at S5. Phosphoserine is present on S110. Residues 114 to 124 show a composition bias toward basic and acidic residues; that stretch reads GRRDEVAEAQR. At S128 the chain carries Phosphoserine. The RING-type zinc finger occupies 225-267; it reads CPICLYPPTAAKITRCGHIFCWACILHYLSLSEKTWSKCPICY. Disordered regions lie at residues 589-611, 646-665, and 715-804; these read DIEKRKRQRQKKAREERRRERRI, DSALGPTSTEGHGALSLSPL, and KADG…VHTK. Residues 601–611 are compositionally biased toward basic and acidic residues; that stretch reads AREERRRERRI. A compositionally biased stretch (polar residues) spans 646–655; the sequence is DSALGPTSTE. Residues 715–729 are compositionally biased toward basic and acidic residues; the sequence is KADGWPKTAPKKDDN. The span at 795-804 shows a compositional bias: polar residues; the sequence is LFSTSVVHTK.

The protein belongs to the RNF10 family. In terms of assembly, interacts with MEOX2.

The protein localises to the cytoplasm. It localises to the nucleus. The enzyme catalyses S-ubiquitinyl-[E2 ubiquitin-conjugating enzyme]-L-cysteine + [acceptor protein]-L-lysine = [E2 ubiquitin-conjugating enzyme]-L-cysteine + N(6)-ubiquitinyl-[acceptor protein]-L-lysine.. Its pathway is protein modification; protein ubiquitination. E3 ubiquitin-protein ligase that catalyzes monoubiquitination of 40S ribosomal proteins RPS2/us5 and RPS3/us3 in response to ribosome stalling. Part of a ribosome quality control that takes place when ribosomes have stalled during translation initiation (iRQC): RNF10 acts by mediating monoubiquitination of RPS2/us5 and RPS3/us3, promoting their degradation by the proteasome. Also promotes ubiquitination of 40S ribosomal proteins in response to ribosome stalling during translation elongation. The action of RNF10 in iRQC is counteracted by USP10. May also act as a transcriptional factor involved in the regulation of MAG (Myelin-associated glycoprotein) expression. Acts as a regulator of Schwann cell differentiation and myelination. In Mus musculus (Mouse), this protein is E3 ubiquitin-protein ligase RNF10.